The primary structure comprises 101 residues: Large ribosomal subunit protein eL36 (101 aa).

2 disordered regions span residues 1–31 (MGEIAVGLNKGHQVTKKAGTPRPSRRKGFLS) and 75–101 (GTHMRGKKKREEMAGVLRKMQAASKGE).

Belongs to the eukaryotic ribosomal protein eL36 family.

In Ulva compressa (Green alga), this protein is Large ribosomal subunit protein eL36 (RL36).